Reading from the N-terminus, the 129-residue chain is UPF0212 protein MA_1372 (129 aa).

It belongs to the UPF0212 family.

The protein is UPF0212 protein MA_1372 of Methanosarcina acetivorans (strain ATCC 35395 / DSM 2834 / JCM 12185 / C2A).